A 92-amino-acid chain; its full sequence is Small integral membrane protein 12 (92 aa).

Residues 15-34 traverse the membrane as a helical segment; that stretch reads YVTFPVAFVVGAVGYHLEWF.

The protein belongs to the SMIM12 family.

The protein resides in the membrane. This chain is Small integral membrane protein 12 (SMIM12), found in Nomascus leucogenys (Northern white-cheeked gibbon).